The primary structure comprises 757 residues: Xaa-Pro dipeptidyl-peptidase (757 aa).

Active-site charge relay system residues include Ser-348, Asp-468, and His-498.

The protein belongs to the peptidase S15 family. As to quaternary structure, homodimer.

It is found in the cytoplasm. The catalysed reaction is Hydrolyzes Xaa-Pro-|- bonds to release unblocked, N-terminal dipeptides from substrates including Ala-Pro-|-p-nitroanilide and (sequentially) Tyr-Pro-|-Phe-Pro-|-Gly-Pro-|-Ile.. In terms of biological role, removes N-terminal dipeptides sequentially from polypeptides having unsubstituted N-termini provided that the penultimate residue is proline. The protein is Xaa-Pro dipeptidyl-peptidase of Streptococcus pneumoniae (strain Hungary19A-6).